The primary structure comprises 111 residues: uncharacterized protein (111 aa).

Residues 43-72 are disordered; sequence NGRAEETEADAPLPEEPSLPDLPDLSDLDS. The segment covering 61 to 72 has biased composition (low complexity); it reads LPDLPDLSDLDS.

This is an uncharacterized protein from Homo sapiens (Human).